A 455-amino-acid chain; its full sequence is MRNCCQEHRLSAGHLEPEISSSCASDVKSSPDMDSVSSQDSLYLPNSVGASLEDQDLWAQFHQEGTEMIITKSGRRMFPQCKIRLFGLHPYAKYMLLVDFVPLDNFRYKWNKNQWEAAGKAEPHPPCRTYVHPDSPAPGAHWMKDAICFQKLKLTNNTLDQQGHIILHSMHRYKPRFHVVQSDDMYNSPWGLVQVFSFPETEFTAVTAYQNEKITKLKINHNPFAKGFREQERSHKRDDVLKTLQQSPSKRQKRKKWEDSPEAEISDFPKATRVKEESIMDPAGVYQNWVSDHEANQGLTPHSPESDGANQEQQVPSSSSNFYNRNPYRRSSQHLSSPYDLGEPSSRRLTPDVATVPDSDPDSLAVLHVIPTQNSTQDRTCGVNFSMEAQMKQPLRGAMYSPYGAEQWMVPAQGQYRPMGYTAYPTDLSTQGAVAHPHSGMSDWSQYSLFPYSCW.

A DNA-binding region (T-box) is located at residues 57 to 230 (LWAQFHQEGT…HNPFAKGFRE (174 aa)). The span at 229-241 (REQERSHKRDDVL) shows a compositional bias: basic and acidic residues. 2 disordered regions span residues 229 to 276 (REQE…RVKE) and 295 to 360 (ANQG…PDSD). Residues 308-326 (GANQEQQVPSSSSNFYNRN) show a composition bias toward polar residues.

In terms of assembly, forms a repression complex on the promoters of the nodal/nr1 and siamois genes with the maternal factors tcf7l1/tcf3 and pouf5.1/oct-25. Interacts (via C-terminus) with tcf7l1/tcf3 (via N-terminus). Also interacts with the other POU-domain transcription factors pou5f1.2/oct-91 and pou5f1.3/oct-60. As to expression, vegetally localized in oocytes and expressed in the presumptive endoderm and mesoderm at early gastrula stage. Expression is down-regulated in the endoderm by the end of gastrulation but maintained in the lateral and ventral mesoderm of the blastopore lip.

The protein resides in the nucleus. Transcription factor required for both mesoderm and endoderm formation in the embryo; signaling determinants and concentration levels may determine which germ layer is formed. Acts together with beta-catenin to activate genes that are responsible for mesoderm induction including wnt-8, eomes t/bra, siamois, mix1 and sox17. Directly binds to promoter DNA. Patterns the mesoderm along the dorsoventral and posterior axis. Activates siamois gene transcription when alone or in combination with beta-catenin, but inhibits siamois transcription in combination with pou5f1.1/oct-25. This chain is T-box protein VegT, found in Xenopus tropicalis (Western clawed frog).